The primary structure comprises 717 residues: Ubinuclein-2 (717 aa).

3 disordered regions span residues 114-136, 166-308, and 620-717; these read KDGS…TEDS, LERI…SAKS, and ADSS…NLPS. Positions 118 to 136 are enriched in acidic residues; it reads DGEELDGAPDDDDYDTEDS. Polar residues-rich tracts occupy residues 214–246 and 285–308; these read QSAS…NGND and SSKS…SAKS. A compositionally biased stretch (basic and acidic residues) spans 623-632; sequence SFERSKQQHE. Positions 634-641 match the Nuclear localization signal motif; it reads LKRTSSLS. A compositionally biased stretch (basic and acidic residues) spans 653–665; sequence KTEPALEETHLPA. Over residues 675 to 705 the composition is skewed to basic residues; the sequence is RQTHLKSKTHKQVQVHPQSKAHKQAQVHPKA. Positions 706 to 717 are enriched in polar residues; that stretch reads KTQTPPDLNLPS.

This sequence belongs to the ubinuclein family. As to quaternary structure, component of the HIRA complex made of UBN1, UBN2, ASF1A, CABIN1 and HIRA. Interacts with HIRA.

The protein localises to the nucleus. Its subcellular location is the nucleolus. May be required for replication-independent chromatin assembly. The sequence is that of Ubinuclein-2 from Arabidopsis thaliana (Mouse-ear cress).